A 111-amino-acid chain; its full sequence is Small ribosomal subunit protein uS15c (111 aa).

This sequence belongs to the universal ribosomal protein uS15 family. In terms of assembly, part of the 30S ribosomal subunit.

The protein resides in the plastid. It localises to the chloroplast. This chain is Small ribosomal subunit protein uS15c (rps15), found in Staurastrum punctulatum (Green alga).